The following is a 110-amino-acid chain: MKLKKKFLEKSKKIAEERIDILMNLAEKESKDGKTDRSKNYVVLGKKIAMRMRMPYPKEWKRRICKNCGSFLIYGKNSRVRTKAKNYPHVVITCLECNSITRIPIKTEKK.

Residues C65, C68, C94, and C97 each contribute to the Zn(2+) site.

It belongs to the eukaryotic/archaeal RNase P protein component 4 family. In terms of assembly, consists of a catalytic RNA component and at least 4-5 protein subunits. Requires Zn(2+) as cofactor.

The protein resides in the cytoplasm. The enzyme catalyses Endonucleolytic cleavage of RNA, removing 5'-extranucleotides from tRNA precursor.. Part of ribonuclease P, a protein complex that generates mature tRNA molecules by cleaving their 5'-ends. This Methanococcus maripaludis (strain C7 / ATCC BAA-1331) protein is Ribonuclease P protein component 4.